We begin with the raw amino-acid sequence, 480 residues long: F-box only protein 3 (480 aa).

In terms of domain architecture, F-box spans 10–56; the sequence is LLTLESLPTDPLLLILSFVDYRDLINCCYVSRRLSQLSTHDPLWRRH. The ApaG domain occupies 278–408; the sequence is VATTGDITVS…FHMACPTFRV (131 aa). The segment covering 419–459 has biased composition (acidic residues); sequence EYEEMEEEAEEEEEEENDDSADMDESDESDEDENESDEGEG. A disordered region spans residues 419-464; sequence EYEEMEEEAEEEEEEENDDSADMDESDESDEDENESDEGEGEERRR.

In terms of assembly, part of a SCF (SKP1-cullin-F-box) protein ligase complex SCF(FBXO3) consisting of FBXO3, SKP1, CUL1 and RBX1. Interacts with PML, interaction is direct and takes place either alone or within the SCF complex.

It localises to the nucleus. It functions in the pathway protein modification; protein ubiquitination. Substrate recognition component of the SCF (SKP1-CUL1-F-box protein)-type E3 ubiquitin ligase complex, SCF(FBXO3), which mediates the ubiquitination and subsequent proteasomal degradation of target proteins. Mediates the ubiquitination of HIPK2 and probably that of EP300, leading to rapid degradation by the proteasome. In the presence of PML, HIPK2 ubiquitination still occurs, but degradation is prevented. PML, HIPK2 and FBXO3 may act synergically to activate p53/TP53-dependent transactivation. The SCF(FBXO3) also acts as a regulator of inflammation by mediating ubiquitination and degradation of FBXL2 in response to lipopolysaccharide (LPS). The SCF(FBXO3) complex specifically recognizes FBXL2 phosphorylated at 'Thr-404' and promotes its ubiquitination. This Rattus norvegicus (Rat) protein is F-box only protein 3 (Fbxo3).